A 140-amino-acid polypeptide reads, in one-letter code: Nucleoside diphosphate kinase (140 aa).

K11, F59, R87, T93, R104, and N114 together coordinate ATP. H117 (pros-phosphohistidine intermediate) is an active-site residue.

It belongs to the NDK family. Homotetramer. Mg(2+) is required as a cofactor.

The protein resides in the cytoplasm. The catalysed reaction is a 2'-deoxyribonucleoside 5'-diphosphate + ATP = a 2'-deoxyribonucleoside 5'-triphosphate + ADP. It catalyses the reaction a ribonucleoside 5'-diphosphate + ATP = a ribonucleoside 5'-triphosphate + ADP. In terms of biological role, major role in the synthesis of nucleoside triphosphates other than ATP. The ATP gamma phosphate is transferred to the NDP beta phosphate via a ping-pong mechanism, using a phosphorylated active-site intermediate. This Rhizobium meliloti (strain 1021) (Ensifer meliloti) protein is Nucleoside diphosphate kinase.